We begin with the raw amino-acid sequence, 310 residues long: Small ribosomal subunit biogenesis GTPase RsgA (310 aa).

A CP-type G domain is found at 77–238 (LSKQSHILAA…IIDTPGIKGF (162 aa)). Residues 126–129 (NKTD) and 180–188 (GNSGVGKST) each bind GTP. Positions 262, 267, 269, and 275 each coordinate Zn(2+).

It belongs to the TRAFAC class YlqF/YawG GTPase family. RsgA subfamily. In terms of assembly, monomer. Associates with 30S ribosomal subunit, binds 16S rRNA. The cofactor is Zn(2+).

The protein localises to the cytoplasm. One of several proteins that assist in the late maturation steps of the functional core of the 30S ribosomal subunit. Helps release RbfA from mature subunits. May play a role in the assembly of ribosomal proteins into the subunit. Circularly permuted GTPase that catalyzes slow GTP hydrolysis, GTPase activity is stimulated by the 30S ribosomal subunit. The sequence is that of Small ribosomal subunit biogenesis GTPase RsgA from Phocaeicola vulgatus (strain ATCC 8482 / DSM 1447 / JCM 5826 / CCUG 4940 / NBRC 14291 / NCTC 11154) (Bacteroides vulgatus).